The chain runs to 428 residues: Serine--tRNA ligase (428 aa).

An L-serine-binding site is contributed by 236–238; that stretch reads TAE. 267-269 contacts ATP; sequence RSE. E290 is an L-serine binding site. Residue 354–357 coordinates ATP; the sequence is EISS. Position 388 (S388) interacts with L-serine.

The protein belongs to the class-II aminoacyl-tRNA synthetase family. Type-1 seryl-tRNA synthetase subfamily. In terms of assembly, homodimer. The tRNA molecule binds across the dimer.

The protein localises to the cytoplasm. It catalyses the reaction tRNA(Ser) + L-serine + ATP = L-seryl-tRNA(Ser) + AMP + diphosphate + H(+). It carries out the reaction tRNA(Sec) + L-serine + ATP = L-seryl-tRNA(Sec) + AMP + diphosphate + H(+). It participates in aminoacyl-tRNA biosynthesis; selenocysteinyl-tRNA(Sec) biosynthesis; L-seryl-tRNA(Sec) from L-serine and tRNA(Sec): step 1/1. Functionally, catalyzes the attachment of serine to tRNA(Ser). Is also able to aminoacylate tRNA(Sec) with serine, to form the misacylated tRNA L-seryl-tRNA(Sec), which will be further converted into selenocysteinyl-tRNA(Sec). In Psychrobacter sp. (strain PRwf-1), this protein is Serine--tRNA ligase.